The primary structure comprises 436 residues: F-box/LRR-repeat protein At2g40920 (436 aa).

Residues Glu48–Val98 form the F-box domain. LRR repeat units follow at residues Asn276–Asp301 and Tyr393–Lys416.

The polypeptide is F-box/LRR-repeat protein At2g40920 (Arabidopsis thaliana (Mouse-ear cress)).